The primary structure comprises 247 residues: PF03932 family protein CutC (247 aa).

Belongs to the CutC family.

Its subcellular location is the cytoplasm. The polypeptide is PF03932 family protein CutC (Chromobacterium violaceum (strain ATCC 12472 / DSM 30191 / JCM 1249 / CCUG 213 / NBRC 12614 / NCIMB 9131 / NCTC 9757 / MK)).